The chain runs to 155 residues: Ribosomal RNA large subunit methyltransferase H (155 aa).

S-adenosyl-L-methionine is bound by residues Leu72, Gly103, and 122 to 127 (LSPLTL).

This sequence belongs to the RNA methyltransferase RlmH family. As to quaternary structure, homodimer.

Its subcellular location is the cytoplasm. The catalysed reaction is pseudouridine(1915) in 23S rRNA + S-adenosyl-L-methionine = N(3)-methylpseudouridine(1915) in 23S rRNA + S-adenosyl-L-homocysteine + H(+). In terms of biological role, specifically methylates the pseudouridine at position 1915 (m3Psi1915) in 23S rRNA. This is Ribosomal RNA large subunit methyltransferase H from Pasteurella multocida (strain Pm70).